We begin with the raw amino-acid sequence, 117 residues long: Large ribosomal subunit protein uL18 (117 aa).

It belongs to the universal ribosomal protein uL18 family. Part of the 50S ribosomal subunit; part of the 5S rRNA/L5/L18/L25 subcomplex. Contacts the 5S and 23S rRNAs.

Its function is as follows. This is one of the proteins that bind and probably mediate the attachment of the 5S RNA into the large ribosomal subunit, where it forms part of the central protuberance. The sequence is that of Large ribosomal subunit protein uL18 from Klebsiella pneumoniae subsp. pneumoniae (strain ATCC 700721 / MGH 78578).